The primary structure comprises 219 residues: Small ribosomal subunit protein uS19 (219 aa).

The unknown stretch occupies residues 1 to 128 (MGFKGAWNKR…YEEIYAQYKQ (128 aa)). Residues 129–219 (MTEKKAYVDP…DKTAKVVKKK (91 aa)) form a small ribosomal subunit protein uS19 region.

It belongs to the universal ribosomal protein uS19 family.

Functionally, protein S19 forms a complex with S13 that binds strongly to the 16S ribosomal RNA. The polypeptide is Small ribosomal subunit protein uS19 (Aquifex pyrophilus).